The following is a 375-amino-acid chain: 2-methylcitrate synthase (375 aa).

Residues Lys-72 and His-187 each contribute to the substrate site. The active site involves His-222. Position 255-259 (255-259) interacts with CoA; the sequence is KIMGF. The active site involves His-261. Residue Arg-270 coordinates substrate. Asp-312 is an active-site residue. The substrate site is built by Arg-337 and Arg-356.

This sequence belongs to the citrate synthase family. Homodimer.

It carries out the reaction propanoyl-CoA + oxaloacetate + H2O = (2S,3S)-2-methylcitrate + CoA + H(+). It catalyses the reaction oxaloacetate + acetyl-CoA + H2O = citrate + CoA + H(+). It participates in organic acid metabolism; propanoate degradation. The protein operates within carbohydrate metabolism; tricarboxylic acid cycle; isocitrate from oxaloacetate: step 1/2. Functionally, involved in the catabolism of short chain fatty acids (SCFA) via the tricarboxylic acid (TCA)(acetyl degradation route) and via the 2-methylcitrate cycle II (propionate degradation route). Catalyzes the Claisen condensation of propionyl-CoA and oxaloacetate (OAA) to yield 2-methylcitrate (2-MC) and CoA. Catalyzes the condensation of oxaloacetate with acetyl-CoA. This Shewanella oneidensis (strain ATCC 700550 / JCM 31522 / CIP 106686 / LMG 19005 / NCIMB 14063 / MR-1) protein is 2-methylcitrate synthase (prpC).